A 159-amino-acid polypeptide reads, in one-letter code: Ribosomal RNA large subunit methyltransferase H (159 aa).

S-adenosyl-L-methionine contacts are provided by residues Leu-76, Gly-108, and 127–132 (FSKMTF).

It belongs to the RNA methyltransferase RlmH family. As to quaternary structure, homodimer.

The protein localises to the cytoplasm. It carries out the reaction pseudouridine(1915) in 23S rRNA + S-adenosyl-L-methionine = N(3)-methylpseudouridine(1915) in 23S rRNA + S-adenosyl-L-homocysteine + H(+). Functionally, specifically methylates the pseudouridine at position 1915 (m3Psi1915) in 23S rRNA. The chain is Ribosomal RNA large subunit methyltransferase H from Clostridium botulinum (strain Okra / Type B1).